The primary structure comprises 974 residues: Glycine dehydrogenase (decarboxylating) (974 aa).

An N6-(pyridoxal phosphate)lysine modification is found at K720.

This sequence belongs to the GcvP family. As to quaternary structure, the glycine cleavage system is composed of four proteins: P, T, L and H. Pyridoxal 5'-phosphate is required as a cofactor.

The catalysed reaction is N(6)-[(R)-lipoyl]-L-lysyl-[glycine-cleavage complex H protein] + glycine + H(+) = N(6)-[(R)-S(8)-aminomethyldihydrolipoyl]-L-lysyl-[glycine-cleavage complex H protein] + CO2. The glycine cleavage system catalyzes the degradation of glycine. The P protein binds the alpha-amino group of glycine through its pyridoxal phosphate cofactor; CO(2) is released and the remaining methylamine moiety is then transferred to the lipoamide cofactor of the H protein. The protein is Glycine dehydrogenase (decarboxylating) of Cupriavidus metallidurans (strain ATCC 43123 / DSM 2839 / NBRC 102507 / CH34) (Ralstonia metallidurans).